The following is a 371-amino-acid chain: Neuropeptide S receptor (371 aa).

Residues 1-21 show a composition bias toward polar residues; the sequence is MPANFTEGSFDSSGTGQTLDS. A disordered region spans residues 1 to 22; sequence MPANFTEGSFDSSGTGQTLDSS. Residues 1–52 lie on the Extracellular side of the membrane; it reads MPANFTEGSFDSSGTGQTLDSSPVACTETVTFTEVVEGKEWGSFYYSFKTEQ. A glycan (N-linked (GlcNAc...) asparagine) is linked at Asn4. Residues 53–73 form a helical membrane-spanning segment; it reads LITLWVLFVFTIVGNSVVLFS. Over 74 to 82 the chain is Cytoplasmic; sequence TWRRKKKSR. The chain crosses the membrane as a helical span at residues 83–103; the sequence is MTFFVTQLAITDSFTGLVNIL. Residues 104–123 lie on the Extracellular side of the membrane; the sequence is TDINWRFTGDFTAPDLVCRV. Residues Cys121 and Cys197 are joined by a disulfide bond. The helical transmembrane segment at 124 to 144 threads the bilayer; it reads VRYLQVVLLYASTYVLVSLSI. Topologically, residues 145 to 164 are cytoplasmic; the sequence is DRYHAIVYPMKFLQGEKQAR. Residues 165-185 form a helical membrane-spanning segment; it reads VLIVIAWSLSFLFSIPTLIIF. Residues 186–212 are Extracellular-facing; it reads GKRTLSNGEVQCWALWPDDSYWTPYMT. A helical transmembrane segment spans residues 213 to 233; it reads IVAFLVYFIPLTIISIMYGIV. Topologically, residues 234–275 are cytoplasmic; sequence IRTIWIKSKTYETVISNCSDGKLCSSYNRGLISKAKIKAIKY. The chain crosses the membrane as a helical span at residues 276–296; the sequence is SIIIILAFICCWSPYFLFDIL. Topologically, residues 297–312 are extracellular; it reads DNFNLLPDTQERFYAS. A helical membrane pass occupies residues 313-333; the sequence is VIIQNLPALNSAINPLIYCVF. Over 334–371 the chain is Cytoplasmic; the sequence is SSSISFPCREQRSQDSRMTFRERTERHEMQILSKPEFI.

The protein belongs to the G-protein coupled receptor 1 family. Vasopressin/oxytocin receptor subfamily. In terms of tissue distribution, isoform 4 is ubiquitous; it is detected in glandular epithelia of bronchus, stomach, small intestine, colon, uterus, esophagus, spleen, kidney, pancreas, prostate and breast. Isoform 1 is detected in uterus, colon and prostate, and in the smooth muscle cell layer in bronchial and arterial walls (at protein level). Isoform 1 is predominantly expressed in smooth muscle. Isoform 4 is predominantly expressed in epithelial cells. In bronchial biopsies, it is expressed in smooth muscle cells of asthma patients, but not in control patients; whereas in epithelial cells, its expression is consistently stronger in asthma patients.

It localises to the cell membrane. The protein resides in the cytoplasm. In terms of biological role, G-protein coupled receptor for neuropeptide S (NPS). Promotes mobilization of intracellular Ca(2+) stores. Inhibits cell growth in response to NPS binding. Involved in pathogenesis of asthma and other IgE-mediated diseases. In Homo sapiens (Human), this protein is Neuropeptide S receptor (NPSR1).